Consider the following 1259-residue polypeptide: MERDLYGDMADQPIPVGQGVQIRFINDLKENGKPRGKRSKQDSYGVAVRVQGIDGQPFVVLNSGDKAKSSYDYDRHYSERSSTLDTAYSQSSRESAWSRGSQKKTDNGEYPSLGYRSATSQQSTSASNKTNKNGLSTSSFSNQSSEDIDTKPLSSVDSLITKFDVKGQVRGRTARRSQALKDERKRSQSLDGRKNYQDTADSREISLQQQNEVPARRETVSSANRSFARQSLEREDINKTRLTKEWLDQGGEEPVIVKQQRSVQSEFQLKSTPDLLRDQQADGSDPTREMIFSILRDGSTENENNLRKKTSILLEKFPSLQAQPGEDTRSLGSQKKELERKVAELQRQLDDEMKQRMKLESSQGRPKAGMQRLEIQLEESKEECSRLKDLYDKKKNELNAVSQELMEVRMGKEQVETKLRAMEDKLMDSKEELSHLRAKGGTSPDKLALMKELEEVQDELDEVLQIRQKQEELLRQKDRELTALKGALKDEVANHDKDLDRVREQYQNDVQQLRKNMENVSQDQLSLETERQKINQVVRNLQRELEESSDEINQWKEMFQKNKEELRSTKQELLQMKMEKEESEDELKETKDRFSLLQSELEQAKKGSVDPGELASVRKELQRVQDQLKQLSVDKQKVEENLHQRERELSALKGALKEEVAGRGRETERLREQLQSEVVQFKKDNENLGRESQRIQDQLKQVLLEKQRHEEAVHQRERELSALKGALKDEVSGRDREAERLRAQFEQDAMQTKRSYEELVKINKRLESEKVDLERVRQVIENNLQESREENDDLRRKILGLEAQLKETNTFCDDLQRAESRLKDKITKLETERKRMEDTLGEAADQEQELAFVKRDLGNKLEEAQRSLKRLSLEYEELQECYQEEMKQKDHLKKTKNELEEQKRLLDKSMDKLTRELDNMSNESRGSLQVLQSQLEEFREKSRREIGEAQKQAKEKTAEAERHQFNSSRMQEEVQKLKLALQELQVEKETVELDKQMVTQRLQNLEQDTESKKRVQDDRSRQVKVLEDKLKRMEAELDEEKNTVELLSDRINRSREQMEQQRAELMQERARGQDLECDKISLERQNKDLKGRLANMEGQQKPSVNVSHLEAKLQDIQERLQSEEREKATLLSTNRKLERKLKELNIQLEDERLHVNDQKDQLNLRVKALKRQVDEAEEEIERLEGLRKKAVREMEEQQELNEQLQTRLKTMEKESKRKPIRPAHNDDDDLSSDGEYGGSYDPSSITSLLTESNLQTSSC.

A head region spans residues 9-324; that stretch reads MADQPIPVGQ…EKFPSLQAQP (316 aa). Positions 41 to 55 match the ZIM motif; that stretch reads QDSYGVAVRVQGIDG. Over residues 69 to 79 the composition is skewed to basic and acidic residues; sequence SSYDYDRHYSE. Disordered stretches follow at residues 69 to 151, 169 to 232, 317 to 338, 941 to 969, and 1192 to 1259; these read SSYD…IDTK, VRGR…RQSL, FPSL…KKEL, KSRR…NSSR, and REME…TSSC. The segment covering 80 to 100 has biased composition (polar residues); the sequence is RSSTLDTAYSQSSRESAWSRG. Over residues 117–127 the composition is skewed to low complexity; it reads SATSQQSTSAS. Over residues 128–145 the composition is skewed to polar residues; that stretch reads NKTNKNGLSTSSFSNQSS. Positions 179-204 are enriched in basic and acidic residues; the sequence is ALKDERKRSQSLDGRKNYQDTADSRE. Positions 220 to 229 are enriched in polar residues; sequence VSSANRSFAR. Positions 325-1218 form a coiled coil; that stretch reads GEDTRSLGSQ…KTMEKESKRK (894 aa). A compositionally biased stretch (basic and acidic residues) spans 326-338; it reads EDTRSLGSQKKEL. The tract at residues 1220 to 1259 is tail; that stretch reads IRPAHNDDDDLSSDGEYGGSYDPSSITSLLTESNLQTSSC. The span at 1241–1259 shows a compositional bias: polar residues; that stretch reads DPSSITSLLTESNLQTSSC.

The protein belongs to the cingulin family. As to quaternary structure, parallel homodimer. Interacts with TJP1/ZO1 and TJP2/ZO2.

The protein resides in the cell junction. Its subcellular location is the tight junction. Its function is as follows. Probably plays a role in the formation and regulation of the tight junction (TJ) paracellular permeability barrier, possibly by linking ZO proteins to the actomyosin cytoskeleton. The polypeptide is Cingulin (Xenopus tropicalis (Western clawed frog)).